We begin with the raw amino-acid sequence, 241 residues long: MHIRMVGTGSAFAKKFDNNNALLEQDGCCLLIDCGITLPKALYQMGLAFPEIDAVLISHIHADHVGGLEEFAFQMMFKYNRKPVLFIADTLIEPLWEHTLRGGLTQDPLNKLEHFFDVRPIIANTETELFPGLRVKLLPTKHIPNKPSYSFLFNDRFFYSADMRFDKELLLRLADGGVQTIFHDCQLEEPGVVHASLNELLTLPESVQKKTWLMHYGDTIDQYQGRTGHMRIVEPQRRYEV.

Positions 17–215 (DNNNALLEQD…SVQKKTWLMH (199 aa)) are beta-lactamase-like. Zn(2+)-binding residues include His-59, His-61, Asp-63, His-64, His-142, Asp-162, and His-215.

It belongs to the nuclease anti-Pycsar protein Apyc1 family. Homodimer. Zn(2+) serves as cofactor.

The enzyme catalyses 3',5'-cyclic CMP + H2O = CMP + H(+). It catalyses the reaction 3',5'-cyclic UMP + H2O = UMP + H(+). Its function is as follows. Counteracts the endogenous Pycsar antiviral defense system. Phosphodiesterase that enables metal-dependent hydrolysis of host cyclic nucleotide Pycsar defense signals such as cCMP and cUMP. The chain is Anti-Pycsar protein Apyc1 from Paenibacillus harenae.